The primary structure comprises 266 residues: Putative expansin-A30 (266 aa).

The signal sequence occupies residues 1–24; that stretch reads MAAASSTTATTAILAAVIISLAGA. The Expansin-like EG45 domain maps to 55 to 170; that stretch reads GGACGYGNLY…RRVPCARAGG (116 aa). An Expansin-like CBD domain is found at 180–261; the sequence is YWLLAYVMNV…SWCFGLTYQA (82 aa).

Belongs to the expansin family. Expansin A subfamily.

The protein resides in the secreted. It is found in the cell wall. It localises to the membrane. Functionally, may cause loosening and extension of plant cell walls by disrupting non-covalent bonding between cellulose microfibrils and matrix glucans. No enzymatic activity has been found. May be required for rapid internodal elongation in deepwater rice during submergence. The polypeptide is Putative expansin-A30 (EXPA30) (Oryza sativa subsp. japonica (Rice)).